Consider the following 402-residue polypeptide: Oxysterol-binding protein 8 (402 aa).

Residues 328–361 (DRIALEEGNLDVAAKEKHNLEEKQREDKRQRVAE) adopt a coiled-coil conformation.

It belongs to the OSBP family.

The sequence is that of Oxysterol-binding protein 8 (osbH) from Dictyostelium discoideum (Social amoeba).